We begin with the raw amino-acid sequence, 158 residues long: Ribosomal RNA large subunit methyltransferase H (158 aa).

Residues L76, G107, and 126–131 (LSGLTM) each bind S-adenosyl-L-methionine.

This sequence belongs to the RNA methyltransferase RlmH family. In terms of assembly, homodimer.

Its subcellular location is the cytoplasm. The catalysed reaction is pseudouridine(1915) in 23S rRNA + S-adenosyl-L-methionine = N(3)-methylpseudouridine(1915) in 23S rRNA + S-adenosyl-L-homocysteine + H(+). Specifically methylates the pseudouridine at position 1915 (m3Psi1915) in 23S rRNA. This is Ribosomal RNA large subunit methyltransferase H from Teredinibacter turnerae (strain ATCC 39867 / T7901).